Reading from the N-terminus, the 605-residue chain is MSWGTELWDQFDSLDKHTQWGIDFLERYAKFVKERIEIEQNYAKQLRNLVKKYCPKRSSKDEEPRFTSCIAFFNILNELNDYAGQREVVAEEMAHRVYGELMRYAHDLKTERKMHLQEGRKAQQYLDMCWKQMDNSKKKFERECREAEKAQQSYERLDNDTNATKADVEKAKQQLNLRTHMADENKNEYAAQLQNFNGEQHKHFYVVIPQIYKQLQEMDERRTIKLSECYRGFADSERKVIPIISKCLEGMILAAKSVDERRDSQMVVDSFKSGFEPPGDFPFEDYSQHIYRTVSDGTISASKQEGGKMDSKSTAGKAKGKLWLFGKKPKPQSPPLTPTSLFTSSPPNGSQFLTLSIEPVHYCMNEIKTGKPRIPSFRSLKRGWSMKMGPALEDFSHLPPEQRRKKLQQRIDELNRGLQKESDQKEALNKMKDVYEKNPQMGDPGSLQPKLAETMNNIDRLRMEIHKNEAWLSEVEGKTGVRGDRRHSSDINHLVTQGRESPEGSYTDDANQEVRGPPQQHGHHSEFDDEFEDDDPLPAIGHCKAIYPFDGHNEGTLAMKEGEVLYIIEEDKGDGWTRARRQNGEEGYVPTTYIDVTLEKNSKGS.

One can recognise an F-BAR domain in the interval 1–263; that stretch reads MSWGTELWDQ…AAKSVDERRD (263 aa). The stretch at 66–258 forms a coiled coil; sequence FTSCIAFFNI…EGMILAAKSV (193 aa). Residues 245–535 are interaction with CDC42; that stretch reads SKCLEGMILA…EFDDEFEDDD (291 aa). The residue at position 295 (S295) is a Phosphoserine. The disordered stretch occupies residues 325–345; sequence FGKKPKPQSPPLTPTSLFTSS. Positions 392–484 form a coiled coil; that stretch reads LEDFSHLPPE…VEGKTGVRGD (93 aa). Positions 397–474 constitute an REM-1 domain; it reads HLPPEQRRKK…IHKNEAWLSE (78 aa). Basic and acidic residues predominate over residues 480-490; it reads GVRGDRRHSSD. A disordered region spans residues 480–539; sequence GVRGDRRHSSDINHLVTQGRESPEGSYTDDANQEVRGPPQQHGHHSEFDDEFEDDDPLPA. A phosphoserine mark is found at S488, S501, and S505. The segment at 522–605 is interaction with DNM1; it reads GHHSEFDDEF…VTLEKNSKGS (84 aa). Residues 527 to 536 are compositionally biased toward acidic residues; that stretch reads FDDEFEDDDP. The SH3 domain occupies 538 to 599; the sequence is PAIGHCKAIY…PTTYIDVTLE (62 aa). The tract at residues 541–597 is interaction with DNM2 and WASL; that stretch reads GHCKAIYPFDGHNEGTLAMKEGEVLYIIEEDKGDGWTRARRQNGEEGYVPTTYIDVT. The interaction with DAAM1, DIAPH1 and DIAPH2 stretch occupies residues 541–605; it reads GHCKAIYPFD…VTLEKNSKGS (65 aa).

The protein belongs to the FNBP1 family. As to quaternary structure, homodimerizes, the dimers can polymerize end-to-end to form filamentous structures. Interacts with GTP-bound CDC42. Interacts with DAAM1, DIAPH1, DIAPH2, DNM1, DNM2 and WASL/N-WASP. Interacts with ATG3. Interacts (via SH3 domain) with ABI1, WASF2, CDC42 and WIPF1. Isoform 1 is expressed in brain. Isoform 2 is expressed in brain, kidney and lung. Within the brain expression is seen in cortical neurons, hippocampal pyramidal neurons, hypothalamus and piriform cortex.

It localises to the cytoplasm. Its subcellular location is the cytoskeleton. It is found in the cell cortex. The protein localises to the cytoplasmic vesicle. The protein resides in the cell membrane. Its function is as follows. Required to coordinate membrane tubulation with reorganization of the actin cytoskeleton during endocytosis. May bind to lipids such as phosphatidylinositol 4,5-bisphosphate and phosphatidylserine and promote membrane invagination and the formation of tubules. Also promotes CDC42-induced actin polymerization by activating the WASL-WASPIP complex, the predominant form of WASL/N-WASP in cells. Actin polymerization may promote the fission of membrane tubules to form endocytic vesicles. Essential for autophagy of intracellular bacterial pathogens. May negatively regulate neurite extension and axon branching in developing neurons. In Rattus norvegicus (Rat), this protein is Formin-binding protein 1-like (Fnbp1l).